A 219-amino-acid chain; its full sequence is Lipid transferase CIDEB (219 aa).

The 78-residue stretch at 33 to 110 folds into the CIDE-N domain; that stretch reads PRQRPFRVCD…VLELGQSWSP (78 aa).

This sequence belongs to the CIDE family. As to quaternary structure, interacts with DFFA. Interacts with DFFB; inhibited by DFFB. Interacts with APOB. Interacts with PREB/SEC12; facilitating loading of SCAP-SREBP into COPII vesicles.

It localises to the lipid droplet. Its subcellular location is the endoplasmic reticulum membrane. It is found in the golgi apparatus. The protein localises to the cytoplasmic vesicle. The protein resides in the COPI-coated vesicle. Its function is as follows. Lipid transferase specifically expressed in hepatocytes, which promotes unilocular lipid droplet formation by mediating lipid droplet fusion. Lipid droplet fusion promotes their enlargement, restricting lipolysis and favoring lipid storage. Localizes on the lipid droplet surface, at focal contact sites between lipid droplets, and mediates atypical lipid droplet fusion by promoting directional net neutral lipid transfer from the smaller to larger lipid droplets. The transfer direction may be driven by the internal pressure difference between the contacting lipid droplet pair. Promotes lipid exchange and lipid droplet fusion in both small and large lipid droplet-containing hepatocytes. In addition to its role in lipid droplet fusion, also involved in cytoplasmic vesicle biogenesis and transport. Required for very-low-density lipoprotein (VLDL) lipidation and maturation. Probably involved in the biogenesis of VLDL transport vesicles by forming a COPII vesicle coat and facilitating the formation of endoplasmic reticulum-derived large vesicles. Also involved in sterol-regulated export of the SCAP-SREBP complex, composed of SCAP, SREBF1/SREBP1 and SREBF2/SREBP2, by promoting loading of SCAP-SREBP into COPII vesicles. May also activate apoptosis. In Bos taurus (Bovine), this protein is Lipid transferase CIDEB (CIDEB).